Reading from the N-terminus, the 563-residue chain is Forkhead box protein O (563 aa).

2 disordered regions span residues 1-72 and 177-243; these read MDDF…DPQQ and KSVR…SYQL. Residue threonine 43 is modified to Phosphothreonine; by PKB/AKT1. Positions 58–72 are enriched in polar residues; the sequence is TKASNQQLANGDPQQ. A DNA-binding region (fork-head) is located at residues 90 to 196; sequence WGNLSYADLI…ETSRYEKRRG (107 aa). The residue at position 185 (serine 185) is a Phosphoserine; by PKB/AKT1. The span at 216-225 shows a compositional bias: polar residues; it reads ATPSPSSSVS. Position 253 is a phosphoserine; by PKB/AKT1 (serine 253). A phosphoserine mark is found at serine 256, serine 257, and serine 262. The tract at residues 317–371 is disordered; that stretch reads AASGLPTQPPPPYQPPQHPQHTQGYALNGPGLSPNSVTTTMSPAYPNSEPSSDSL. Pro residues predominate over residues 323–334; sequence TQPPPPYQPPQH. Over residues 349–358 the composition is skewed to polar residues; it reads SPNSVTTTMS.

Interacts with melt.

It localises to the cytoplasm. The protein resides in the nucleus. In terms of biological role, transcription factor involved in the regulation of the insulin signaling pathway. Consistently activates both the downstream target Thor\d4EBP and the feedback control target InR. Involved in negative regulation of the cell cycle, modulating cell growth and proliferation. In response to cellular stresses, such as nutrient deprivation or increased levels of reactive oxygen species, foxo is activated and inhibits growth through the action of target genes such as Thor. Foxo activated in the adult fat body can regulate lifespan in adults; an insulin peptide itself may function as one secondary messenger of insulin-regulated aging. Also regulates Lip4, homolog of human acid lipases, thereby acting as a key modulator of lipid metabolism by insulin signaling and integrates insulin responses to glucose and lipid homeostasis. In Drosophila mojavensis (Fruit fly), this protein is Forkhead box protein O.